The primary structure comprises 207 residues: Thiamine-phosphate synthase (207 aa).

Residues 36–40 and Asn68 each bind 4-amino-2-methyl-5-(diphosphooxymethyl)pyrimidine; that span reads QLRMK. Mg(2+) is bound by residues Asp69 and Asp88. Ser106 provides a ligand contact to 4-amino-2-methyl-5-(diphosphooxymethyl)pyrimidine. 132–134 contacts 2-[(2R,5Z)-2-carboxy-4-methylthiazol-5(2H)-ylidene]ethyl phosphate; it reads TNT. A 4-amino-2-methyl-5-(diphosphooxymethyl)pyrimidine-binding site is contributed by Lys135. 2-[(2R,5Z)-2-carboxy-4-methylthiazol-5(2H)-ylidene]ethyl phosphate contacts are provided by residues Gly162 and 182-183; that span reads VS.

The protein belongs to the thiamine-phosphate synthase family. Mg(2+) serves as cofactor.

The catalysed reaction is 2-[(2R,5Z)-2-carboxy-4-methylthiazol-5(2H)-ylidene]ethyl phosphate + 4-amino-2-methyl-5-(diphosphooxymethyl)pyrimidine + 2 H(+) = thiamine phosphate + CO2 + diphosphate. It catalyses the reaction 2-(2-carboxy-4-methylthiazol-5-yl)ethyl phosphate + 4-amino-2-methyl-5-(diphosphooxymethyl)pyrimidine + 2 H(+) = thiamine phosphate + CO2 + diphosphate. The enzyme catalyses 4-methyl-5-(2-phosphooxyethyl)-thiazole + 4-amino-2-methyl-5-(diphosphooxymethyl)pyrimidine + H(+) = thiamine phosphate + diphosphate. The protein operates within cofactor biosynthesis; thiamine diphosphate biosynthesis; thiamine phosphate from 4-amino-2-methyl-5-diphosphomethylpyrimidine and 4-methyl-5-(2-phosphoethyl)-thiazole: step 1/1. Functionally, condenses 4-methyl-5-(beta-hydroxyethyl)thiazole monophosphate (THZ-P) and 2-methyl-4-amino-5-hydroxymethyl pyrimidine pyrophosphate (HMP-PP) to form thiamine monophosphate (TMP). The polypeptide is Thiamine-phosphate synthase (Methanococcus maripaludis (strain C6 / ATCC BAA-1332)).